The sequence spans 423 residues: D-tagatose-1,6-bisphosphate aldolase subunit GatZ (423 aa).

This sequence belongs to the GatZ/KbaZ family. GatZ subfamily. Forms a complex with GatY.

It participates in carbohydrate metabolism; D-tagatose 6-phosphate degradation; D-glyceraldehyde 3-phosphate and glycerone phosphate from D-tagatose 6-phosphate: step 2/2. In terms of biological role, component of the tagatose-1,6-bisphosphate aldolase GatYZ that is required for full activity and stability of the Y subunit. Could have a chaperone-like function for the proper and stable folding of GatY. When expressed alone, GatZ does not show any aldolase activity. Is involved in the catabolism of galactitol. This is D-tagatose-1,6-bisphosphate aldolase subunit GatZ from Salmonella newport (strain SL254).